Reading from the N-terminus, the 429-residue chain is Phosphomethylpyrimidine synthase (429 aa).

Substrate-binding positions include N66, M95, Y124, H163, S185–G187, D226–R229, and E265. Position 269 (H269) interacts with Zn(2+). A substrate-binding site is contributed by Y292. Residue H333 coordinates Zn(2+). C409, C412, and C416 together coordinate [4Fe-4S] cluster.

It belongs to the ThiC family. Requires [4Fe-4S] cluster as cofactor.

The catalysed reaction is 5-amino-1-(5-phospho-beta-D-ribosyl)imidazole + S-adenosyl-L-methionine = 4-amino-2-methyl-5-(phosphooxymethyl)pyrimidine + CO + 5'-deoxyadenosine + formate + L-methionine + 3 H(+). The protein operates within cofactor biosynthesis; thiamine diphosphate biosynthesis. Its function is as follows. Catalyzes the synthesis of the hydroxymethylpyrimidine phosphate (HMP-P) moiety of thiamine from aminoimidazole ribotide (AIR) in a radical S-adenosyl-L-methionine (SAM)-dependent reaction. The polypeptide is Phosphomethylpyrimidine synthase (Carboxydothermus hydrogenoformans (strain ATCC BAA-161 / DSM 6008 / Z-2901)).